Here is a 335-residue protein sequence, read N- to C-terminus: MNLINEKLNNLENSATKSPKEAVVLLNMGGPNSLYEVGVFLKNMFDDPFILTIKNNFMRKMVGKMIVNSRIEKSKKIYEKLGGKSPLTPITFALTERLNELDPSRFYTYAMRYTPPYASMVLQDLALKEIESLVFFSMYPQYSSTTTLSSFNDAFNALKSLETFRPKVRVIERFYADKKLNEIILNTILSALNNCKSQDFVLIFSVHGLPKSIVDAGDTYQQECEHHVSLLKELMQQKNIPFKEVLLSYQSKLGPMKWLEPSTEELIEKHRKSNIIIYPLAFTIDNSETLYELDMQYRLMAERLAVKEYLVCPCLNDSIEFAKFIIELVKNLKSE.

Positions 207 and 288 each coordinate Fe cation.

Belongs to the ferrochelatase family.

The protein localises to the cytoplasm. It carries out the reaction heme b + 2 H(+) = protoporphyrin IX + Fe(2+). The protein operates within porphyrin-containing compound metabolism; protoheme biosynthesis; protoheme from protoporphyrin-IX: step 1/1. Functionally, catalyzes the ferrous insertion into protoporphyrin IX. The protein is Ferrochelatase of Helicobacter pylori (strain J99 / ATCC 700824) (Campylobacter pylori J99).